A 224-amino-acid chain; its full sequence is Synaptogyrin-2 (224 aa).

Met-1 bears the N-acetylmethionine mark. Phosphoserine is present on Ser-3. The MARVEL domain occupies Phe-20–Lys-171. 4 helical membrane passes run Val-31–Ile-51, Ser-72–Phe-92, Val-105–Phe-125, and Ala-147–Tyr-167.

Belongs to the synaptogyrin family. Post-translationally, may be tyrosine phosphorylated by Src.

The protein resides in the cytoplasmic vesicle membrane. It localises to the cytoplasmic vesicle. Its subcellular location is the secretory vesicle. The protein localises to the synaptic vesicle membrane. Functionally, may play a role in regulated exocytosis. In neuronal cells, modulates the localization of synaptophysin/SYP into synaptic-like microvesicles and may therefore play a role in the formation and/or the maturation of this vesicles. May also play a role in GLUT4 storage and transport to the plasma membrane. In Mus musculus (Mouse), this protein is Synaptogyrin-2.